The sequence spans 1050 residues: Beta-galactosidase (1050 aa).

2 residues coordinate substrate: Asn-110 and Asp-209. A Na(+)-binding site is contributed by Asp-209. The Mg(2+) site is built by Glu-432, His-434, and Glu-477. Substrate-binding positions include Glu-477 and 553–556 (EYAH). The active-site Proton donor is the Glu-477. Glu-553 acts as the Nucleophile in catalysis. Asn-613 lines the Mg(2+) pocket. Residues Phe-617 and Asn-620 each contribute to the Na(+) site. Positions 620 and 1023 each coordinate substrate.

It belongs to the glycosyl hydrolase 2 family. In terms of assembly, homotetramer. Mg(2+) is required as a cofactor. Na(+) serves as cofactor.

It catalyses the reaction Hydrolysis of terminal non-reducing beta-D-galactose residues in beta-D-galactosides.. This chain is Beta-galactosidase, found in Yersinia enterocolitica serotype O:8 / biotype 1B (strain NCTC 13174 / 8081).